The following is a 225-amino-acid chain: Insulin-induced gene 2 protein (225 aa).

At 1–28 the chain is on the cytoplasmic side; it reads MAEGETESPRPKKCGPYISSVTSQSVNV. The helical transmembrane segment at 29–51 threads the bilayer; the sequence is VIRGVVLFFIGVFLALVLNLLQI. The Lumenal segment spans residues 52 to 70; the sequence is QRNVTLFPPDVITSIFSSA. Residues 71–88 form a helical membrane-spanning segment; the sequence is WWVPPCCGTASAVIGLLY. Residues 89–103 lie on the Cytoplasmic side of the membrane; the sequence is PCIDRHLGEPHKFKR. Residues 104–126 traverse the membrane as a helical segment; it reads EWSSVMRCVAVFVGINHASAKVD. The Lumenal portion of the chain corresponds to 127–129; the sequence is FDN. Residues 130 to 148 traverse the membrane as a helical segment; it reads NFQFSLTLAALSVGLWWTF. Over 149–153 the chain is Cytoplasmic; the sequence is DRSRS. Ser-151 bears the Phosphoserine mark. The helical transmembrane segment at 154–175 threads the bilayer; it reads GFGLGVGIAFLATVVTQLLVYN. At 176–189 the chain is on the lumenal side; sequence GVYQYTSPDFLYVR. Residues 190–207 traverse the membrane as a helical segment; the sequence is SWLPCIFFAGGITMGNIG. At 208 to 225 the chain is on the cytoplasmic side; the sequence is RQLAMYECKVIAEKSHQE. Cys-215 is modified (cysteine sulfenic acid (-SOH); alternate). A Glycyl cysteine thioester (Cys-Gly) (interchain with G-Cter in ubiquitin); alternate cross-link involves residue Cys-215. Residues 219-225 carry the KxHxx motif; that stretch reads AEKSHQE.

The protein belongs to the INSIG family. Interacts with SCAP; interaction is direct and only takes place in the presence of sterols; it prevents interaction between SCAP and the coat protein complex II (COPII). Associates with the SCAP-SREBP complex (composed of SCAP and SREBF1/SREBP1 or SREBF2/SREBP2); association is mediated via its interaction with SCAP and only takes place in the presence of sterols. Interacts with RNF139. Interacts with RNF145. In terms of processing, phosphorylation at Ser-151 by PCK1 reduces binding to oxysterol, disrupting the interaction between INSIG2 and SCAP, thereby promoting nuclear translocation of SREBP proteins (SREBF1/SREBP1 or SREBF2/SREBP2) and subsequent transcription of downstream lipogenesis-related genes. Post-translationally, polyubiquitinated by AMFR/gp78 at Cys-215 in some tissues such as adipose tissues, undifferentiated myoblasts and liver, leading to its degradation. In differentiated myotubes, Cys-215 oxidation prevents ubiquitination at the same site, resulting in protein stabilization. Oxidized at Cys-215 in differentiated myotubes, preventing ubiquitination at the same site, and resulting in protein stabilization. Expressed in liver, testis, kidney, spleen, intestine, brain and adrenal gland.

Its subcellular location is the endoplasmic reticulum membrane. Functionally, oxysterol-binding protein that mediates feedback control of cholesterol synthesis by controlling both endoplasmic reticulum to Golgi transport of SCAP and degradation of HMGCR. Acts as a negative regulator of cholesterol biosynthesis by mediating the retention of the SCAP-SREBP complex in the endoplasmic reticulum, thereby blocking the processing of sterol regulatory element-binding proteins (SREBPs) SREBF1/SREBP1 and SREBF2/SREBP2. Binds oxysterol, including 22-hydroxycholesterol, 24-hydroxycholesterol, 25-hydroxycholesterol and 27-hydroxycholesterol, regulating interaction with SCAP and retention of the SCAP-SREBP complex in the endoplasmic reticulum. In presence of oxysterol, interacts with SCAP, retaining the SCAP-SREBP complex in the endoplasmic reticulum, thereby preventing SCAP from escorting SREBF1/SREBP1 and SREBF2/SREBP2 to the Golgi. Sterol deprivation or phosphorylation by PCK1 reduce oxysterol-binding, disrupting the interaction between INSIG2 and SCAP, thereby promoting Golgi transport of the SCAP-SREBP complex, followed by processing and nuclear translocation of SREBF1/SREBP1 and SREBF2/SREBP2. Also regulates cholesterol synthesis by regulating degradation of HMGCR: initiates the sterol-mediated ubiquitin-mediated endoplasmic reticulum-associated degradation (ERAD) of HMGCR via recruitment of the reductase to the ubiquitin ligase RNF139. This Mus musculus (Mouse) protein is Insulin-induced gene 2 protein.